Here is a 449-residue protein sequence, read N- to C-terminus: MSHIKFDYSKVLDKFVAPHEVEYMQSQVTAADELIRKGTGAGSDFLGWLDLPEKYDREEFDRILKAAEQIKSDSDVLVVIGIGGSYLGAKAAIDFLNHHFANLQTKEERKAPQILYAGNSISSTYLADLVEYVADKDFSVNVISKSGTTTEPAIAFRVFKELLVKKYGQEEANKRIYATTDRQKGAVKVEADANGWGTFVVPDDIGGRFSVLTAVGLLPIAASGADIKALMEGANAARKDYTSDKISENEAYQYAAVRNILYRKGYATEILVNYEPSLQYFSEWWKQLAGESEGKDQKGIYPTSANFSTDLHSLGQFIQEGTRIMFETVVRVDKPRKNVLIPTLEEDLDGLGYLQGKDVDFVNKKATDGVLLAHTDGDVPNMYVTLPEQDAFTLGYTIYFFELAIALSGYLNAINPFDQPGVEAYKRNMFALLGKPGFEELSKELNARL.

Catalysis depends on Glu291, which acts as the Proton donor. Residues His312 and Lys426 contribute to the active site.

The protein belongs to the GPI family.

Its subcellular location is the cytoplasm. The catalysed reaction is alpha-D-glucose 6-phosphate = beta-D-fructose 6-phosphate. The protein operates within carbohydrate biosynthesis; gluconeogenesis. It participates in carbohydrate degradation; glycolysis; D-glyceraldehyde 3-phosphate and glycerone phosphate from D-glucose: step 2/4. Catalyzes the reversible isomerization of glucose-6-phosphate to fructose-6-phosphate. In Streptococcus pneumoniae (strain ATCC BAA-255 / R6), this protein is Glucose-6-phosphate isomerase.